Consider the following 246-residue polypeptide: 3-deoxy-manno-octulosonate cytidylyltransferase (246 aa).

This sequence belongs to the KdsB family.

The protein localises to the cytoplasm. It carries out the reaction 3-deoxy-alpha-D-manno-oct-2-ulosonate + CTP = CMP-3-deoxy-beta-D-manno-octulosonate + diphosphate. It functions in the pathway nucleotide-sugar biosynthesis; CMP-3-deoxy-D-manno-octulosonate biosynthesis; CMP-3-deoxy-D-manno-octulosonate from 3-deoxy-D-manno-octulosonate and CTP: step 1/1. The protein operates within bacterial outer membrane biogenesis; lipopolysaccharide biosynthesis. Functionally, activates KDO (a required 8-carbon sugar) for incorporation into bacterial lipopolysaccharide in Gram-negative bacteria. This Rickettsia conorii (strain ATCC VR-613 / Malish 7) protein is 3-deoxy-manno-octulosonate cytidylyltransferase.